The chain runs to 197 residues: Nucleoid occlusion factor SlmA (197 aa).

The 61-residue stretch at 7–67 (INRREHILQC…GLIDFIEESL (61 aa)) folds into the HTH tetR-type domain. Positions 30-49 (TTAKLAAEVGVSEAALYRHF) form a DNA-binding region, H-T-H motif.

This sequence belongs to the nucleoid occlusion factor SlmA family. In terms of assembly, homodimer. Interacts with FtsZ.

Its subcellular location is the cytoplasm. It is found in the nucleoid. Functionally, required for nucleoid occlusion (NO) phenomenon, which prevents Z-ring formation and cell division over the nucleoid. Acts as a DNA-associated cell division inhibitor that binds simultaneously chromosomal DNA and FtsZ, and disrupts the assembly of FtsZ polymers. SlmA-DNA-binding sequences (SBS) are dispersed on non-Ter regions of the chromosome, preventing FtsZ polymerization at these regions. In Shewanella loihica (strain ATCC BAA-1088 / PV-4), this protein is Nucleoid occlusion factor SlmA.